Reading from the N-terminus, the 123-residue chain is Small ribosomal subunit protein bS16 (123 aa).

Residues 87–123 form a disordered region; that stretch reads AKNNPIKAKPGKRAQERAAEKAQKAADAAAAAADAAE. Positions 99 to 110 are enriched in basic and acidic residues; it reads RAQERAAEKAQK. Positions 111–123 are enriched in low complexity; the sequence is AADAAAAAADAAE.

It belongs to the bacterial ribosomal protein bS16 family.

This chain is Small ribosomal subunit protein bS16, found in Rhizobium etli (strain CIAT 652).